The sequence spans 438 residues: Ribosomal protein uS12 methylthiotransferase RimO (438 aa).

Positions 5 to 115 constitute an MTTase N-terminal domain; it reads PRVGFVSLGC…VMSAVHTHLP (111 aa). C14, C50, C79, C146, C150, and C153 together coordinate [4Fe-4S] cluster. Residues 132-369 enclose the Radical SAM core domain; sequence LTPKHYAYLK…MAVQAEISAR (238 aa). In terms of domain architecture, TRAM spans 372–438; sequence ERRVGQTLQV…SEHDLWGERR (67 aa).

The protein belongs to the methylthiotransferase family. RimO subfamily. Requires [4Fe-4S] cluster as cofactor.

The protein localises to the cytoplasm. It catalyses the reaction L-aspartate(89)-[ribosomal protein uS12]-hydrogen + (sulfur carrier)-SH + AH2 + 2 S-adenosyl-L-methionine = 3-methylsulfanyl-L-aspartate(89)-[ribosomal protein uS12]-hydrogen + (sulfur carrier)-H + 5'-deoxyadenosine + L-methionine + A + S-adenosyl-L-homocysteine + 2 H(+). Its function is as follows. Catalyzes the methylthiolation of an aspartic acid residue of ribosomal protein uS12. The polypeptide is Ribosomal protein uS12 methylthiotransferase RimO (Chromobacterium violaceum (strain ATCC 12472 / DSM 30191 / JCM 1249 / CCUG 213 / NBRC 12614 / NCIMB 9131 / NCTC 9757 / MK)).